The chain runs to 546 residues: Glucose-6-phosphate isomerase (546 aa).

The active-site Proton donor is glutamate 353. Catalysis depends on residues histidine 384 and lysine 512.

Belongs to the GPI family.

The protein localises to the cytoplasm. The catalysed reaction is alpha-D-glucose 6-phosphate = beta-D-fructose 6-phosphate. It participates in carbohydrate biosynthesis; gluconeogenesis. The protein operates within carbohydrate degradation; glycolysis; D-glyceraldehyde 3-phosphate and glycerone phosphate from D-glucose: step 2/4. Catalyzes the reversible isomerization of glucose-6-phosphate to fructose-6-phosphate. This Actinobacillus pleuropneumoniae serotype 3 (strain JL03) protein is Glucose-6-phosphate isomerase.